Consider the following 265-residue polypeptide: Hemin import ATP-binding protein HmuV (265 aa).

The region spanning 13–249 (LKASNLHLQL…TAVENVYGWP (237 aa)) is the ABC transporter domain. 45 to 52 (GPNGAGKS) provides a ligand contact to ATP.

This sequence belongs to the ABC transporter superfamily. Heme (hemin) importer (TC 3.A.1.14.5) family. As to quaternary structure, the complex is composed of two ATP-binding proteins (HmuV), two transmembrane proteins (HmuU) and a solute-binding protein (HmuT).

The protein localises to the cell inner membrane. Its function is as follows. Part of the ABC transporter complex HmuTUV involved in hemin import. Responsible for energy coupling to the transport system. The chain is Hemin import ATP-binding protein HmuV from Photobacterium damsela subsp. piscicida (Pasteurella piscicida).